The sequence spans 1296 residues: MAAADAEQAVLAKQETKQDCCMKTELLREDTPMAADEGSTEKQEGETPMAADGETNGSCEKSGDPSHLNAPKHTQENTRASPQEGTNRVSRVAENGVSERDTEVGKQNHVTADDFMQTSVIGSNGYFLNKPALQGQPLRTPNILTSSLPGHAAKTLPGGASKCRTLSALPQTPTTAPTVPGEGSADTEDRKPTASGTDVRVHRARKTMPKSILGLHAASKDHREVQDHKEPKEDINRNISECGRQQLLPTFPALHQSLPQNQCYMATTKSQTACLPFVLAAAVSRKKKRRMGTYSLVPKKKTKVLKQRTVIEMFKSITHSTVGAKGEKALDDSALHVNGESLEMDSEDEDSDELEDDEDHGAEQAAAFPTEDSRTSKESMSETDRAAKMDGDSEEEQESPDTGEDEDGGDESDLSSESSIKKKFLKRRGKTDSPWIKPARKRRRRSRKKPSSMLGSEACKSSPGSMEQAALGDSAGYMEVSLDSLDLRVRGILSSQTENEGLASGPDVLGTDGLQEVPLCSCRMETPKSREISTLANNQCMATESVDHELGRCTNSVVKYELMRPSNKAPLLVLCEDHRGRMVKHQCCPGCGYFCTAGNFMECQPESSISHRFHKDCASRVNNASYCPHCGEEASKAKEVTIAKADTTSTVTLAPGQEKSLAAEGRADTTTGSIAGAPEDERSQSTAPQAPECFDPAGPAGLVRPTSGLSQGPGKETLESALIALDSEKPKKLRFHPKQLYFSARQGELQKVLLMLVDGIDPNFKMEHQSKRSPLHAAAEAGHVDICHMLVQAGANIDTCSEDQRTPLMEAAENNHLDAVKYLIKAGAQVDPKDAEGSTCLHLAAKKGHYDVVQYLLSNGQMDVNCQDDGGWTPMIWATEYKHVELVKLLLSKGSDINIRDNEENICLHWAAFSGCVDIAEILLAAKCDLHAVNIHGDSPLHIAARENRYDCVVLFLSRDSDVTLKNKEGETPLQCASLSSQVWSALQMSKALRDSAPDKPVAVEKTVSRDIARGYERIPIPCVNAVDSELCPTNYKYVSQNCVTSPMNIDRNITHLQYCVCVDDCSSSTCMCGQLSMRCWYDKDGRLLPEFNMAEPPLIFECNHACSCWRNCRNRVVQNGLRARLQLYRTQDMGWGVRSLQDIPLGTFVCEYVGELISDSEADVREEDSYLFDLDNKDGEVYCIDARFYGNVSRFINHHCEPNLVPVRVFMSHQDLRFPRIAFFSTRLIQAGEQLGFDYGERFWDVKGKLFSCRCGSSKCRHSSAALAQRQASAAQEPQENGLPDTSSAAAADPL.

Disordered regions lie at residues 1–111 and 170–200; these read MAAA…NHVT and PQTP…TDVR. At Ala-2 the chain carries N-acetylalanine. The span at 14–31 shows a compositional bias: basic and acidic residues; sequence QETKQDCCMKTELLREDT. Residue Lys-23 forms a Glycyl lysine isopeptide (Lys-Gly) (interchain with G-Cter in SUMO1); alternate linkage. Lys-23 participates in a covalent cross-link: Glycyl lysine isopeptide (Lys-Gly) (interchain with G-Cter in SUMO2); alternate. Residues 77-89 show a composition bias toward polar residues; it reads NTRASPQEGTNRV. Over residues 97 to 106 the composition is skewed to basic and acidic residues; it reads VSERDTEVGK. Residues Lys-191, Lys-229, Lys-232, Lys-315, and Lys-325 each participate in a glycyl lysine isopeptide (Lys-Gly) (interchain with G-Cter in SUMO2) cross-link. Positions 341–470 are disordered; it reads SLEMDSEDED…SSPGSMEQAA (130 aa). Over residues 342–360 the composition is skewed to acidic residues; that stretch reads LEMDSEDEDSDELEDDEDH. The span at 371–391 shows a compositional bias: basic and acidic residues; sequence EDSRTSKESMSETDRAAKMDG. Acidic residues predominate over residues 392–414; the sequence is DSEEEQESPDTGEDEDGGDESDL. A Glycyl lysine isopeptide (Lys-Gly) (interchain with G-Cter in SUMO2) cross-link involves residue Lys-430. A Phosphoserine modification is found at Ser-433. Residues 438–450 show a composition bias toward basic residues; it reads PARKRRRRSRKKP. Ser-481 carries the phosphoserine modification. Residues Lys-559, Lys-644, Lys-659, and Lys-729 each participate in a glycyl lysine isopeptide (Lys-Gly) (interchain with G-Cter in SUMO2) cross-link. The segment at 653-714 is disordered; that stretch reads LAPGQEKSLA…PTSGLSQGPG (62 aa). ANK repeat units lie at residues 735-764, 770-799, 803-832, 836-866, 870-899, 903-932, 936-965, and 969-1002; these read FHPK…DPNF, SKRS…NIDT, DQRT…QVDP, EGST…DVNC, GGWT…DINI, EENI…DLHA, HGDS…DVTL, and EGET…DKPV. Residues 903–905 form a histone H3K9me binding region; sequence EEN. Residue Ser-1046 is modified to Phosphoserine. The region spanning 1058-1121 is the Pre-SET domain; that stretch reads QYCVCVDDCS…NCRNRVVQNG (64 aa). 9 residues coordinate Zn(2+): Cys-1060, Cys-1062, Cys-1066, Cys-1071, Cys-1073, Cys-1103, Cys-1107, Cys-1109, and Cys-1113. The SET domain maps to 1124 to 1241; that stretch reads ARLQLYRTQD…AGEQLGFDYG (118 aa). S-adenosyl-L-methionine is bound by residues 1134–1136, Tyr-1171, and 1198–1199; these read MGW and NH. The interval 1160-1179 is interaction with histone H3; that stretch reads DSEADVREEDSYLFDLDNKD. Zn(2+) is bound at residue Cys-1201. The interval 1240–1243 is interaction with histone H3; the sequence is YGER. Zn(2+) is bound at residue Cys-1254. Arg-1255 is an S-adenosyl-L-methionine binding site. Zn(2+) contacts are provided by Cys-1256 and Cys-1261. The tract at residues 1271 to 1296 is disordered; the sequence is RQASAAQEPQENGLPDTSSAAAADPL.

The protein belongs to the class V-like SAM-binding methyltransferase superfamily. As to quaternary structure, interacts with WIZ. Part of the E2F6.com-1 complex in G0 phase composed of E2F6, MGA, MAX, TFDP1, CBX3, BAT8, EHMT1, RING1, RNF2, MBLR, L3MBTL2 and YAF2. Interacts with MPHOSPH8. Interacts with CDYL. Interacts with REST only in the presence of CDYL. Part of a complex containing at least CDYL, REST, WIZ, SETB1, EHMT1 and EHMT2. Heterodimer; heterodimerizes with EHMT2. Interacts (via ANK repeats) with RELA (when monomethylated at 'Lys-310'). Interacts with Baz2b. Ubiquitous.

Its subcellular location is the nucleus. The protein localises to the chromosome. It carries out the reaction N(6)-methyl-L-lysyl(9)-[histone H3] + S-adenosyl-L-methionine = N(6),N(6)-dimethyl-L-lysyl(9)-[histone H3] + S-adenosyl-L-homocysteine + H(+). The catalysed reaction is L-lysyl(9)-[histone H3] + S-adenosyl-L-methionine = N(6)-methyl-L-lysyl(9)-[histone H3] + S-adenosyl-L-homocysteine + H(+). Its activity is regulated as follows. Methyltransferase activity is inhibited by BIX-01294. Efficiently inhibited by compound E72, a BIX-01294 derivative in which the diazepane ring and the benzyl are replaced with a 3-dimethylaminopropyl and a 5-aminopentyl group at sites B and C, respectively. In terms of biological role, histone methyltransferase that specifically mono- and dimethylates 'Lys-9' of histone H3 (H3K9me1 and H3K9me2, respectively) in euchromatin. H3K9me represents a specific tag for epigenetic transcriptional repression by recruiting HP1 proteins to methylated histones. Also weakly methylates 'Lys-27' of histone H3 (H3K27me). Also required for DNA methylation, the histone methyltransferase activity is not required for DNA methylation, suggesting that these 2 activities function independently. Probably targeted to histone H3 by different DNA-binding proteins like E2F6, MGA, MAX and/or DP1. During G0 phase, it probably contributes to silencing of MYC- and E2F-responsive genes, suggesting a role in G0/G1 transition in cell cycle. In addition to the histone methyltransferase activity, also methylates non-histone proteins: mediates dimethylation of 'Lys-373' of p53/TP53. Represses the expression of mitochondrial function-related genes, perhaps by occupying their promoter regions, working in concert with probable chromatin reader Baz2b. In Mus musculus (Mouse), this protein is Histone-lysine N-methyltransferase EHMT1 (Ehmt1).